The sequence spans 96 residues: Basic blue protein (96 aa).

The 96-residue stretch at 1-96 (AVYVVGGSGG…SGMKIAVNAL (96 aa)) folds into the Phytocyanin domain. Cu cation-binding residues include H39, C79, H84, and M89. A disulfide bridge links C52 with C85.

The protein is Basic blue protein of Cucumis sativus (Cucumber).